We begin with the raw amino-acid sequence, 418 residues long: Serine/threonine-protein kinase Sgk1 (418 aa).

The segment at 50–78 (PQEPELLNENSSPPPSPSQQINLGPSSNP) is disordered. Polar residues predominate over residues 68-78 (QQINLGPSSNP). A Protein kinase domain is found at 85–342 (FQFLKIIGKG…FMEIKNHMFF (258 aa)). Residues 91–99 (IGKGSFGKV) and lysine 114 each bind ATP. The active-site Proton acceptor is aspartate 209. The AGC-kinase C-terminal domain maps to 343 to 418 (SPINWDDLIN…SYAPPMESYL (76 aa)).

The protein belongs to the protein kinase superfamily. AGC Ser/Thr protein kinase family.

The protein resides in the cytoplasm. It localises to the nucleus. The protein localises to the endoplasmic reticulum. It catalyses the reaction L-seryl-[protein] + ATP = O-phospho-L-seryl-[protein] + ADP + H(+). The catalysed reaction is L-threonyl-[protein] + ATP = O-phospho-L-threonyl-[protein] + ADP + H(+). Its function is as follows. Protein kinase that may play an important role in cellular stress response. Plays an important role in activating certain potassium, sodium, and chloride channels, suggesting an involvement in the regulation of processes such as cell survival, neuronal excitability, and renal sodium excretion. This Xenopus tropicalis (Western clawed frog) protein is Serine/threonine-protein kinase Sgk1 (sgk1).